We begin with the raw amino-acid sequence, 305 residues long: Aurora/IPL1-related protein kinase 2 (305 aa).

One can recognise a Protein kinase domain in the interval 30-280; the sequence is FEIGRPLGKG…LEQVKEHYWI (251 aa). ATP-binding positions include 36–44 and Lys59; that span reads LGKGKFGSV. Asp153 acts as the Proton acceptor in catalysis.

The protein belongs to the protein kinase superfamily. Ser/Thr protein kinase family. Aurora subfamily. In terms of assembly, component of the CPC complex which consists of icp-1; csc-1; bir-1 and air-2. Within the complex, interacts with icp-1; csc-1 and bir-1. Interacts with zen-4. Interacts with tlk-1 and bmk-1. Post-translationally, phosphorylated. Increased phosphorylation upon chromatin obstructions at anaphase.

Its subcellular location is the cytoplasm. The protein resides in the cytoskeleton. It is found in the chromosome. It localises to the midbody. The protein localises to the spindle. It catalyses the reaction L-seryl-[protein] + ATP = O-phospho-L-seryl-[protein] + ADP + H(+). It carries out the reaction L-threonyl-[protein] + ATP = O-phospho-L-threonyl-[protein] + ADP + H(+). Functionally, serine/threonine-protein kinase component of the chromosomal passenger complex (CPC), a complex that acts as a key regulator of chromosome segregation and cytokinesis. The CPC complex has essential functions at the centromere in ensuring correct chromosome alignment and segregation. Required for histone H3 phosphorylation during segregation of homologous chromosomes in meiosis and mitosis. Required for histone H3 'Ser-10' phosphorylation. Phosphorylates tlk-1 at 'Ser-634', which enhances its activity. Phosphorylates zen-4 at 'Ser-680'. Required for the recruitment of bub-1 to the ring-shaped domain between chromosomes during meiotic anaphase I. Also required for the localization of the condensin I complex subunit smc-4 to mitotic chromosomes. Acts at the spindle midzone and the midbody to prevent cleavage furrow regression upon chromatin obstructions during cytokinesis. This chain is Aurora/IPL1-related protein kinase 2, found in Caenorhabditis elegans.